The chain runs to 306 residues: Porphobilinogen deaminase (306 aa).

Cys-239 is modified (S-(dipyrrolylmethanemethyl)cysteine).

This sequence belongs to the HMBS family. Monomer. It depends on dipyrromethane as a cofactor.

The catalysed reaction is 4 porphobilinogen + H2O = hydroxymethylbilane + 4 NH4(+). Its pathway is porphyrin-containing compound metabolism; protoporphyrin-IX biosynthesis; coproporphyrinogen-III from 5-aminolevulinate: step 2/4. Tetrapolymerization of the monopyrrole PBG into the hydroxymethylbilane pre-uroporphyrinogen in several discrete steps. This Helicobacter pylori (strain J99 / ATCC 700824) (Campylobacter pylori J99) protein is Porphobilinogen deaminase (hemC).